Reading from the N-terminus, the 483-residue chain is V-type proton ATPase subunit H (483 aa).

Ser-483 carries the post-translational modification Phosphoserine.

It belongs to the V-ATPase H subunit family. In terms of assembly, V-ATPase is a heteromultimeric enzyme made up of two complexes: the ATP-hydrolytic V1 complex and the proton translocation V0 complex. The V1 complex consists of three catalytic AB heterodimers that form a heterohexamer, three peripheral stalks each consisting of EG heterodimers, one central rotor including subunits D and F, and the regulatory subunits C and H. The proton translocation complex V0 consists of the proton transport subunit a, a ring of proteolipid subunits c9c'', rotary subunit d, subunits e and f, and the accessory subunits ATP6AP1/Ac45 and ATP6AP2/PRR. Interacts with AP2M1. In terms of tissue distribution, expressed in brain (at protein level).

The protein localises to the cytoplasmic vesicle. Its subcellular location is the clathrin-coated vesicle membrane. In terms of biological role, subunit of the V1 complex of vacuolar(H+)-ATPase (V-ATPase), a multisubunit enzyme composed of a peripheral complex (V1) that hydrolyzes ATP and a membrane integral complex (V0) that translocates protons. V-ATPase is responsible for acidifying and maintaining the pH of intracellular compartments and in some cell types, is targeted to the plasma membrane, where it is responsible for acidifying the extracellular environment. Subunit H is essential for V-ATPase activity, but not for the assembly of the complex. Involved in the endocytosis mediated by clathrin-coated pits, required for the formation of endosomes. This chain is V-type proton ATPase subunit H (ATP6V1H), found in Bos taurus (Bovine).